The chain runs to 288 residues: Acetylglutamate kinase (288 aa).

Residues 73 to 74 (GG), arginine 95, and asparagine 186 contribute to the substrate site.

This sequence belongs to the acetylglutamate kinase family. ArgB subfamily.

It is found in the cytoplasm. It catalyses the reaction N-acetyl-L-glutamate + ATP = N-acetyl-L-glutamyl 5-phosphate + ADP. It participates in amino-acid biosynthesis; L-arginine biosynthesis; N(2)-acetyl-L-ornithine from L-glutamate: step 2/4. Its function is as follows. Catalyzes the ATP-dependent phosphorylation of N-acetyl-L-glutamate. This chain is Acetylglutamate kinase, found in Pelagibacter ubique (strain HTCC1062).